Reading from the N-terminus, the 395-residue chain is MAATMAAQSLLSIPVEYRSQVWCRANLPYPPAPQLPIPAVVDILTKASQALPQISFSWTLIDQPPDGSLFLVWQAPTLPSPPDGMHFMSNERFFNMDVAGKVLEIHEAKHGFYPLSETRTMHVRCRYRLLGVGFDNFWLVHYFQGSETDSIPANISVAKPPHLRRYPLPDVKTSPFLLQEPKKHIPEGTALSQRETLPNMGSAQMKSQSRTPSFSNVTTSPVPPINSNATAQTAEGHMGATNMTVDNMNKPSIPPNGNTSILMQEDLEIEKGDVMDKLSPQQICTARFIKHAEWMSQVLLTLQSVKDIEPPALWQEPNSMEELGKELKDNKEQLVKQDQKYQSLQGDLSYTDSMSNLLKEFSNIKSAEECDVLQKKIEEFAEAKIVPLSHVTERS.

The segment at 182 to 230 (KKHIPEGTALSQRETLPNMGSAQMKSQSRTPSFSNVTTSPVPPINSNAT) is disordered. Positions 190–230 (ALSQRETLPNMGSAQMKSQSRTPSFSNVTTSPVPPINSNAT) are enriched in polar residues.

This sequence belongs to the SSR4 family. As to quaternary structure, component of the RSC complex composed of at least arp9, arp42, rsc1, rsc4, rsc7, rsc9, rsc58, sfh1, snf21, ssr1, ssr2, ssr3 and ssr4. The complex interacts with histone and histone variant components of centromeric chromatin. Component of the SWI/SNF global transcription activator complex composed of at least arp9, arp42, snf5, snf22, snf30, sbf59, sol1, ssr1, ssr2, ssr3, ssr4 and tfg3.

Its subcellular location is the cytoplasm. The protein localises to the nucleus. Component of the chromatin structure remodeling complex (RSC), which is involved in transcription regulation and nucleosome positioning. Controls particularly membrane and organelle development genes. Part of the SWI/SNF complex, an ATP-dependent chromatin remodeling complex, required for the positive and negative regulation of gene expression of a large number of genes. It changes chromatin structure by altering DNA-histone contacts within a nucleosome, leading eventually to a change in nucleosome position, thus facilitating or repressing binding of gene-specific transcription factors. The polypeptide is SWI/SNF and RSC complexes subunit ssr4 (ssr4) (Schizosaccharomyces pombe (strain 972 / ATCC 24843) (Fission yeast)).